A 230-amino-acid chain; its full sequence is Orotidine 5'-phosphate decarboxylase (230 aa).

Residues aspartate 12, lysine 34, 61-70, threonine 116, arginine 177, glutamine 186, and arginine 207 each bind substrate; that span reads DMKLLDIDNT. Lysine 63 acts as the Proton donor in catalysis.

Belongs to the OMP decarboxylase family. Type 1 subfamily. As to quaternary structure, homodimer.

It carries out the reaction orotidine 5'-phosphate + H(+) = UMP + CO2. The protein operates within pyrimidine metabolism; UMP biosynthesis via de novo pathway; UMP from orotate: step 2/2. Functionally, catalyzes the decarboxylation of orotidine 5'-monophosphate (OMP) to uridine 5'-monophosphate (UMP). The chain is Orotidine 5'-phosphate decarboxylase from Rhizobium rhizogenes (strain K84 / ATCC BAA-868) (Agrobacterium radiobacter).